The chain runs to 250 residues: Ribosomal RNA small subunit methyltransferase G (250 aa).

S-adenosyl-L-methionine-binding positions include Gly-78, Leu-83, 129–130 (AE), and Arg-144. The tract at residues 224–250 (IAAPRKRGGQQRRAGHARGTSNRRRGT) is disordered. A compositionally biased stretch (basic residues) spans 227–250 (PRKRGGQQRRAGHARGTSNRRRGT).

Belongs to the methyltransferase superfamily. RNA methyltransferase RsmG family.

The protein localises to the cytoplasm. In terms of biological role, specifically methylates the N7 position of guanine in position 518 of 16S rRNA. In Nocardioides sp. (strain ATCC BAA-499 / JS614), this protein is Ribosomal RNA small subunit methyltransferase G.